The chain runs to 272 residues: Interleukin-2 receptor subunit alpha (272 aa).

An N-terminal signal peptide occupies residues 1–21 (MDPYLLMWGLLTFITVPGCQA). A Sushi 1 domain is found at 22–84 (ELCDDDPPKI…SWDNQCQCTS (63 aa)). Residues 22 to 240 (ELCDDDPPKI…ETFIFTTEYQ (219 aa)) lie on the Extracellular side of the membrane. 3 disulfide bridges follow: Cys-24–Cys-67, Cys-49–Cys-80, and Cys-51–Cys-82. Residues Asn-70 and Asn-89 are each glycosylated (N-linked (GlcNAc...) asparagine). Residues 87 to 98 (ARNTTKQVTPQP) are compositionally biased toward polar residues. Positions 87-109 (ARNTTKQVTPQPEEQKERKTTEM) are disordered. A Sushi 2 domain is found at 123–186 (GHCREPPPWE…WTQPQLICTG (64 aa)). 2 cysteine pairs are disulfide-bonded: Cys-125/Cys-168 and Cys-152/Cys-184. A disordered region spans residues 186–213 (GETEPSQFPGEEEPQASPDGLPESETSR). The chain crosses the membrane as a helical span at residues 241–259 (VAVAGCVFLLISVLLLSGL). The Cytoplasmic portion of the chain corresponds to 260 to 272 (TWQRRQRKNRRTI).

In terms of assembly, non-covalent dimer of an alpha and a beta subunit. IL2R exists in 3 different forms: a high affinity dimer, an intermediate affinity monomer (beta subunit), and a low affinity monomer (alpha subunit). The high and intermediate affinity forms also associate with a gamma subunit.

It is found in the membrane. Its function is as follows. Receptor for interleukin-2. The receptor is involved in the regulation of immune tolerance by controlling regulatory T cells (TREGs) activity. TREGs suppress the activation and expansion of autoreactive T-cells. The polypeptide is Interleukin-2 receptor subunit alpha (IL2RA) (Macaca mulatta (Rhesus macaque)).